The chain runs to 346 residues: Dihydroorotase (346 aa).

Zn(2+)-binding residues include histidine 14 and histidine 16. Substrate-binding positions include 16–18 and asparagine 42; that span reads HLR. Zn(2+) contacts are provided by lysine 100, histidine 137, and histidine 175. Lysine 100 is subject to N6-carboxylysine. Position 137 (histidine 137) interacts with substrate. Position 220 (leucine 220) interacts with substrate. Aspartate 248 contributes to the Zn(2+) binding site. The active site involves aspartate 248. Substrate is bound by residues histidine 252 and alanine 264.

This sequence belongs to the metallo-dependent hydrolases superfamily. DHOase family. Class II DHOase subfamily. Homodimer. Zn(2+) serves as cofactor.

The enzyme catalyses (S)-dihydroorotate + H2O = N-carbamoyl-L-aspartate + H(+). The protein operates within pyrimidine metabolism; UMP biosynthesis via de novo pathway; (S)-dihydroorotate from bicarbonate: step 3/3. In terms of biological role, catalyzes the reversible cyclization of carbamoyl aspartate to dihydroorotate. This is Dihydroorotase from Novosphingobium aromaticivorans (strain ATCC 700278 / DSM 12444 / CCUG 56034 / CIP 105152 / NBRC 16084 / F199).